The primary structure comprises 374 residues: DNA-directed RNA polymerase subunit alpha (374 aa).

The tract at residues 1-270 (MIFDEDSSSV…DQFQQFINFD (270 aa)) is alpha N-terminal domain (alpha-NTD). Residues 282–374 (KDVLPYDSNL…ESLSKQYSEE (93 aa)) are alpha C-terminal domain (alpha-CTD).

It belongs to the RNA polymerase alpha chain family. In terms of assembly, homodimer. The RNAP catalytic core consists of 2 alpha, 1 beta, 1 beta' and 1 omega subunit. When a sigma factor is associated with the core the holoenzyme is formed, which can initiate transcription.

It catalyses the reaction RNA(n) + a ribonucleoside 5'-triphosphate = RNA(n+1) + diphosphate. Its function is as follows. DNA-dependent RNA polymerase catalyzes the transcription of DNA into RNA using the four ribonucleoside triphosphates as substrates. The polypeptide is DNA-directed RNA polymerase subunit alpha (Ehrlichia ruminantium (strain Gardel)).